Here is a 102-residue protein sequence, read N- to C-terminus: Urease subunit beta (102 aa).

This sequence belongs to the urease beta subunit family. As to quaternary structure, heterotrimer of UreA (gamma), UreB (beta) and UreC (alpha) subunits. Three heterotrimers associate to form the active enzyme.

It localises to the cytoplasm. It carries out the reaction urea + 2 H2O + H(+) = hydrogencarbonate + 2 NH4(+). It participates in nitrogen metabolism; urea degradation; CO(2) and NH(3) from urea (urease route): step 1/1. The polypeptide is Urease subunit beta (Acinetobacter baumannii (strain ACICU)).